A 469-amino-acid chain; its full sequence is Ectonucleoside triphosphate diphosphohydrolase 5 (469 aa).

A signal peptide spans 1 to 24 (MATPWGAVFFLLMIACAGSTVFYR). Glu172 (proton acceptor) is an active-site residue. Asn232 carries N-linked (GlcNAc...) asparagine glycosylation. 2 disulfides stabilise this stretch: Cys272-Cys303 and Cys363-Cys377.

This sequence belongs to the GDA1/CD39 NTPase family. Monomer; active form. Homodimer; disulfide-linked. Homodimers are enzymatically inactive. Ca(2+) is required as a cofactor. Requires Mg(2+) as cofactor. N-glycosylated; high-mannose type. In terms of tissue distribution, expressed in fetal cells and most adult tissues.

Its subcellular location is the endoplasmic reticulum. It localises to the secreted. It carries out the reaction a ribonucleoside 5'-diphosphate + H2O = a ribonucleoside 5'-phosphate + phosphate + H(+). The catalysed reaction is GDP + H2O = GMP + phosphate + H(+). The enzyme catalyses UDP + H2O = UMP + phosphate + H(+). It catalyses the reaction IDP + H2O = IMP + phosphate + H(+). It carries out the reaction CDP + H2O = CMP + phosphate + H(+). The catalysed reaction is ADP + H2O = AMP + phosphate + H(+). Its pathway is protein modification; protein glycosylation. Hydrolyzes nucleoside diphosphates with a preference for GDP, IDP and UDP compared to ADP and CDP. In the lumen of the endoplasmic reticulum, hydrolyzes UDP that acts as an end-product feedback inhibitor of the UDP-Glc:glycoprotein glucosyltransferases. UMP can be transported back by an UDP-sugar antiporter to the cytosol where it is consumed to regenerate UDP-glucose. Therefore, it positively regulates protein reglucosylation by clearing UDP from the ER lumen and by promoting the regeneration of UDP-glucose. Protein reglucosylation is essential to proper glycoprotein folding and quality control in the ER. The polypeptide is Ectonucleoside triphosphate diphosphohydrolase 5 (ENTPD5) (Mesocricetus auratus (Golden hamster)).